The sequence spans 75 residues: UPF0235 protein Mvan_2846 (75 aa).

Belongs to the UPF0235 family.

This Mycolicibacterium vanbaalenii (strain DSM 7251 / JCM 13017 / BCRC 16820 / KCTC 9966 / NRRL B-24157 / PYR-1) (Mycobacterium vanbaalenii) protein is UPF0235 protein Mvan_2846.